A 303-amino-acid polypeptide reads, in one-letter code: Aspartate carbamoyltransferase catalytic subunit (303 aa).

Carbamoyl phosphate is bound by residues Arg-51 and Thr-52. Lys-80 serves as a coordination point for L-aspartate. Residues Arg-101, His-129, and Gln-132 each contribute to the carbamoyl phosphate site. Residues Arg-162 and Arg-221 each contribute to the L-aspartate site. The carbamoyl phosphate site is built by Leu-260 and Pro-261.

The protein belongs to the aspartate/ornithine carbamoyltransferase superfamily. ATCase family. Heterooligomer of catalytic and regulatory chains.

It carries out the reaction carbamoyl phosphate + L-aspartate = N-carbamoyl-L-aspartate + phosphate + H(+). The protein operates within pyrimidine metabolism; UMP biosynthesis via de novo pathway; (S)-dihydroorotate from bicarbonate: step 2/3. Functionally, catalyzes the condensation of carbamoyl phosphate and aspartate to form carbamoyl aspartate and inorganic phosphate, the committed step in the de novo pyrimidine nucleotide biosynthesis pathway. The sequence is that of Aspartate carbamoyltransferase catalytic subunit from Saccharolobus islandicus (strain M.16.4 / Kamchatka #3) (Sulfolobus islandicus).